We begin with the raw amino-acid sequence, 297 residues long: Light-independent protochlorophyllide reductase iron-sulfur ATP-binding protein (297 aa).

ATP-binding positions include 41–46 (GIGKST) and lysine 70. Serine 45 is a Mg(2+) binding site. Positions 126 and 160 each coordinate [4Fe-4S] cluster. ATP-binding positions include 211-212 (NR) and 235-237 (PDL).

This sequence belongs to the NifH/BchL/ChlL family. In terms of assembly, homodimer. Protochlorophyllide reductase is composed of three subunits; BchL, BchN and BchB. Requires [4Fe-4S] cluster as cofactor.

The enzyme catalyses chlorophyllide a + oxidized 2[4Fe-4S]-[ferredoxin] + 2 ADP + 2 phosphate = protochlorophyllide a + reduced 2[4Fe-4S]-[ferredoxin] + 2 ATP + 2 H2O. It participates in porphyrin-containing compound metabolism; bacteriochlorophyll biosynthesis (light-independent). Functionally, component of the dark-operative protochlorophyllide reductase (DPOR) that uses Mg-ATP and reduced ferredoxin to reduce ring D of protochlorophyllide (Pchlide) to form chlorophyllide a (Chlide). This reaction is light-independent. The L component serves as a unique electron donor to the NB-component of the complex, and binds Mg-ATP. The sequence is that of Light-independent protochlorophyllide reductase iron-sulfur ATP-binding protein from Methylobacterium radiotolerans (strain ATCC 27329 / DSM 1819 / JCM 2831 / NBRC 15690 / NCIMB 10815 / 0-1).